The primary structure comprises 326 residues: Probable cell division protein WhiA (326 aa).

The segment at residues 275-308 is a DNA-binding region (H-T-H motif); sequence SLEELGALADPPLTKDAIAGRIRRLLALADKRAR.

This sequence belongs to the WhiA family.

In terms of biological role, involved in cell division and chromosome segregation. The polypeptide is Probable cell division protein WhiA (Salinispora arenicola (strain CNS-205)).